The primary structure comprises 450 residues: Phosphoglucosamine mutase 2 (450 aa).

Ser101 functions as the Phosphoserine intermediate in the catalytic mechanism. 4 residues coordinate Mg(2+): Ser101, Asp245, Asp247, and Asp249. Ser101 carries the phosphoserine modification.

Belongs to the phosphohexose mutase family. Mg(2+) is required as a cofactor. Activated by phosphorylation.

The enzyme catalyses alpha-D-glucosamine 1-phosphate = D-glucosamine 6-phosphate. Its function is as follows. Catalyzes the conversion of glucosamine-6-phosphate to glucosamine-1-phosphate. The protein is Phosphoglucosamine mutase 2 of Shewanella frigidimarina (strain NCIMB 400).